A 360-amino-acid polypeptide reads, in one-letter code: Endolytic murein transglycosylase (360 aa).

Residues 16–36 (IILSSIVVLFLIIGGAFLYGK) traverse the membrane as a helical segment.

The protein belongs to the transglycosylase MltG family.

It is found in the cell membrane. The catalysed reaction is a peptidoglycan chain = a peptidoglycan chain with N-acetyl-1,6-anhydromuramyl-[peptide] at the reducing end + a peptidoglycan chain with N-acetylglucosamine at the non-reducing end.. Its function is as follows. Functions as a peptidoglycan terminase that cleaves nascent peptidoglycan strands endolytically to terminate their elongation. This chain is Endolytic murein transglycosylase, found in Bacillus subtilis (strain 168).